A 321-amino-acid chain; its full sequence is Glycerol-3-phosphate dehydrogenase [NAD(P)+] (321 aa).

Residues Trp-15, Arg-35, and Lys-101 each contribute to the NADPH site. 2 residues coordinate sn-glycerol 3-phosphate: Lys-101 and Gly-129. An NADPH-binding site is contributed by Ala-133. Sn-glycerol 3-phosphate is bound by residues Lys-184, Asp-237, Ser-247, Arg-248, and Asn-249. Lys-184 acts as the Proton acceptor in catalysis. Arg-248 is an NADPH binding site. NADPH-binding residues include Val-268 and Glu-270.

It belongs to the NAD-dependent glycerol-3-phosphate dehydrogenase family.

It is found in the cytoplasm. The catalysed reaction is sn-glycerol 3-phosphate + NAD(+) = dihydroxyacetone phosphate + NADH + H(+). It carries out the reaction sn-glycerol 3-phosphate + NADP(+) = dihydroxyacetone phosphate + NADPH + H(+). Its pathway is membrane lipid metabolism; glycerophospholipid metabolism. Catalyzes the reduction of the glycolytic intermediate dihydroxyacetone phosphate (DHAP) to sn-glycerol 3-phosphate (G3P), the key precursor for phospholipid synthesis. The protein is Glycerol-3-phosphate dehydrogenase [NAD(P)+] of Acidiphilium cryptum (strain JF-5).